The primary structure comprises 261 residues: Cytochrome c oxidase subunit 3 (261 aa).

The Mitochondrial matrix portion of the chain corresponds to 1–15; that stretch reads MTNQLHPFHMTNPSP. Residues 16-34 form a helical membrane-spanning segment; sequence WPLTGATAALLMTSGLIMW. Over 35–40 the chain is Mitochondrial intermembrane; that stretch reads FHYNSS. A helical membrane pass occupies residues 41-66; sequence QLIMLGLLIMLLTLTQWWRDIVREST. Residues 67–72 are Mitochondrial matrix-facing; the sequence is FQGHHT. A helical membrane pass occupies residues 73–105; it reads PSVQNNLRYGMILFITSEILFFTGFFWAFYHSS. Residues 106–128 lie on the Mitochondrial intermembrane side of the membrane; it reads LSPTAELGNIWPPTGITPLNPFE. A helical transmembrane segment spans residues 129–152; sequence VPLLNTAVLLASGVTITWAHHSLM. The Mitochondrial matrix segment spans residues 153 to 155; it reads EGN. Residues 156-183 form a helical membrane-spanning segment; it reads RPQTLQALTLTIILGTYFTILQAMEYFE. Residues 184–190 are Mitochondrial intermembrane-facing; sequence ASFTIAD. The helical transmembrane segment at 191–223 threads the bilayer; the sequence is SIYGSTFFVATGFHGLHVIIGSTFLIVCLMRQL. Residues 224–232 are Mitochondrial matrix-facing; the sequence is KYHFTSHHH. Residues 233–256 traverse the membrane as a helical segment; sequence FGFEAAAWYWHFVDVIWLFLYLSI. Over 257–261 the chain is Mitochondrial intermembrane; the sequence is YWWGS.

Belongs to the cytochrome c oxidase subunit 3 family. Component of the cytochrome c oxidase (complex IV, CIV), a multisubunit enzyme composed of 14 subunits. The complex is composed of a catalytic core of 3 subunits MT-CO1, MT-CO2 and MT-CO3, encoded in the mitochondrial DNA, and 11 supernumerary subunits COX4I, COX5A, COX5B, COX6A, COX6B, COX6C, COX7A, COX7B, COX7C, COX8 and NDUFA4, which are encoded in the nuclear genome. The complex exists as a monomer or a dimer and forms supercomplexes (SCs) in the inner mitochondrial membrane with NADH-ubiquinone oxidoreductase (complex I, CI) and ubiquinol-cytochrome c oxidoreductase (cytochrome b-c1 complex, complex III, CIII), resulting in different assemblies (supercomplex SCI(1)III(2)IV(1) and megacomplex MCI(2)III(2)IV(2)).

It localises to the mitochondrion inner membrane. The enzyme catalyses 4 Fe(II)-[cytochrome c] + O2 + 8 H(+)(in) = 4 Fe(III)-[cytochrome c] + 2 H2O + 4 H(+)(out). In terms of biological role, component of the cytochrome c oxidase, the last enzyme in the mitochondrial electron transport chain which drives oxidative phosphorylation. The respiratory chain contains 3 multisubunit complexes succinate dehydrogenase (complex II, CII), ubiquinol-cytochrome c oxidoreductase (cytochrome b-c1 complex, complex III, CIII) and cytochrome c oxidase (complex IV, CIV), that cooperate to transfer electrons derived from NADH and succinate to molecular oxygen, creating an electrochemical gradient over the inner membrane that drives transmembrane transport and the ATP synthase. Cytochrome c oxidase is the component of the respiratory chain that catalyzes the reduction of oxygen to water. Electrons originating from reduced cytochrome c in the intermembrane space (IMS) are transferred via the dinuclear copper A center (CU(A)) of subunit 2 and heme A of subunit 1 to the active site in subunit 1, a binuclear center (BNC) formed by heme A3 and copper B (CU(B)). The BNC reduces molecular oxygen to 2 water molecules using 4 electrons from cytochrome c in the IMS and 4 protons from the mitochondrial matrix. The sequence is that of Cytochrome c oxidase subunit 3 (MT-CO3) from Pelomedusa subrufa (African side-necked turtle).